The following is a 903-amino-acid chain: Probable leucine--tRNA ligase, mitochondrial (903 aa).

Lys68 bears the N6-acetyllysine mark. Positions 92-102 (YPSGKLHMGHV) match the 'HIGH' region motif. Lys236 is subject to N6-acetyllysine. A 'KMSKS' region motif is present at residues 639–643 (KMSKS). Lys642 is a binding site for ATP. A Phosphoserine modification is found at Ser711.

Belongs to the class-I aminoacyl-tRNA synthetase family.

It localises to the mitochondrion matrix. The catalysed reaction is tRNA(Leu) + L-leucine + ATP = L-leucyl-tRNA(Leu) + AMP + diphosphate. The polypeptide is Probable leucine--tRNA ligase, mitochondrial (LARS2) (Pongo abelii (Sumatran orangutan)).